Consider the following 247-residue polypeptide: Complement C1q subcomponent subunit B (247 aa).

The signal sequence occupies residues 1–22 (MKTPRGSVLVLLLLNLLRVSWA). The residue at position 23 (Gln23) is a Pyrrolidone carboxylic acid. 4-hydroxyproline occurs at positions 29, 32, 35, 47, and 50. The tract at residues 30–78 (SIPGIPGIPGKPGSDGKPGTPGTKGEKGLPGLVSHLNENGEKGDPGFPG) is disordered. Positions 39–98 (GKPGSDGKPGTPGTKGEKGLPGLVSHLNENGEKGDPGFPGMPGKVGPKGPIGPKGVPGPP) constitute a Collagen-like domain. Positions 40 to 52 (KPGSDGKPGTPGT) are enriched in low complexity. 5-hydroxylysine is present on residues Lys53 and Lys56. A 4-hydroxyproline modification is found at Pro59. Lys71 is subject to 5-hydroxylysine. 2 positions are modified to 4-hydroxyproline: Pro77 and Pro80. 5-hydroxylysine occurs at positions 86 and 92. Residues Pro95 and Pro98 each carry the 4-hydroxyproline modification. At Lys104 the chain carries 5-hydroxylysine. The C1q domain maps to 111–247 (KATQKIAFSA…GFMLFPDTEA (137 aa)). An intrachain disulfide couples Cys175 to Cys192. Ca(2+) is bound by residues Asp193, Tyr194, and Gln200.

As to quaternary structure, core component of the complement C1 complex, a calcium-dependent complex composed of 1 molecule of the C1Q subcomplex, 2 molecules of C1R and 2 molecules of C1S. The C1Q subcomplex is composed 18 subunits: 3 chains of C1QA, C1QB, and C1QC trimerize to form 6 collagen-like triple helices connected to six globular ligand-recognition modules (C1q domain). Post-translationally, hydroxylated on lysine and proline residues. Hydroxylated lysine residues can be glycosylated. Bovine C1Q contains up to 66.3 hydroxylysine-galactosylglucose residues. Total percentage hydroxylysine residues glycosylated is 92.0%. Contains no hydroxylysine-monosaccharides.

Its subcellular location is the secreted. The protein resides in the cell surface. The C1Q subcomplex is inhibited by sulfated molecules, such as triterpenoid sulfates, heparan sulfate, or chondroitin sulfates. Functionally, core component of the complement C1 complex, a multiprotein complex that initiates the classical pathway of the complement system, a cascade of proteins that leads to phagocytosis and breakdown of pathogens and signaling that strengthens the adaptive immune system. The classical complement pathway is initiated by the C1Q subcomplex of the C1 complex, which specifically binds IgG or IgM immunoglobulins complexed with antigens, forming antigen-antibody complexes on the surface of pathogens: C1QA, together with C1QB and C1QC, specifically recognizes and binds the Fc regions of IgG or IgM via its C1q domain. Immunoglobulin-binding activates the proenzyme C1R, which cleaves C1S, initiating the proteolytic cascade of the complement system. The C1Q subcomplex is activated by a hexamer of IgG complexed with antigens, while it is activated by a pentameric IgM. The C1Q subcomplex also recognizes and binds phosphatidylserine exposed on the surface of cells undergoing programmed cell death, possibly promoting activation of the complement system. This chain is Complement C1q subcomponent subunit B (C1QB), found in Bos taurus (Bovine).